Reading from the N-terminus, the 156-residue chain is ATP synthase subunit b (156 aa).

Residues I5–P27 traverse the membrane as a helical segment.

It belongs to the ATPase B chain family. In terms of assembly, F-type ATPases have 2 components, F(1) - the catalytic core - and F(0) - the membrane proton channel. F(1) has five subunits: alpha(3), beta(3), gamma(1), delta(1), epsilon(1). F(0) has three main subunits: a(1), b(2) and c(10-14). The alpha and beta chains form an alternating ring which encloses part of the gamma chain. F(1) is attached to F(0) by a central stalk formed by the gamma and epsilon chains, while a peripheral stalk is formed by the delta and b chains.

It localises to the cell inner membrane. In terms of biological role, f(1)F(0) ATP synthase produces ATP from ADP in the presence of a proton or sodium gradient. F-type ATPases consist of two structural domains, F(1) containing the extramembraneous catalytic core and F(0) containing the membrane proton channel, linked together by a central stalk and a peripheral stalk. During catalysis, ATP synthesis in the catalytic domain of F(1) is coupled via a rotary mechanism of the central stalk subunits to proton translocation. Functionally, component of the F(0) channel, it forms part of the peripheral stalk, linking F(1) to F(0). The polypeptide is ATP synthase subunit b (Francisella philomiragia subsp. philomiragia (strain ATCC 25017 / CCUG 19701 / FSC 153 / O#319-036)).